A 101-amino-acid chain; its full sequence is Interleukin-8 (101 aa).

An N-terminal signal peptide occupies residues 1-22; sequence MTSKLAVALLAAFLLSAALCEA. 2 disulfide bridges follow: Cys34-Cys61 and Cys36-Cys77.

This sequence belongs to the intercrine alpha (chemokine CxC) family. In terms of assembly, homodimer. Interacts with TNFAIP6 (via Link domain); this interaction interferes with chemokine binding to glycosaminoglycans.

Its subcellular location is the secreted. Chemotactic factor that mediates inflammatory response by attracting neutrophils, basophils, and T-cells to clear pathogens and protect the host from infection. Also plays an important role in neutrophil activation. Released in response to an inflammatory stimulus, exerts its effect by binding to the G-protein-coupled receptors CXCR1 and CXCR2, primarily found in neutrophils, monocytes and endothelial cells. G-protein heterotrimer (alpha, beta, gamma subunits) constitutively binds to CXCR1/CXCR2 receptor and activation by IL8 leads to beta and gamma subunits release from Galpha (GNAI2 in neutrophils) and activation of several downstream signaling pathways including PI3K and MAPK pathways. The protein is Interleukin-8 (CXCL8) of Bos taurus (Bovine).